A 369-amino-acid chain; its full sequence is Biglycan (369 aa).

The signal sequence occupies residues 1 to 16 (MCPLWLLAALLALSQA). A propeptide spanning residues 17 to 37 (LPFEQKAFWDFTLDDGLPMLN) is cleaved from the precursor. O-linked (Xyl...) (glycosaminoglycan) serine glycans are attached at residues Ser-42 and Ser-48. 2 disulfides stabilise this stretch: Cys-64–Cys-70 and Cys-68–Cys-77. 12 LRR repeats span residues 83–103 (KAVP…NNDI), 104–127 (SELR…NNKI), 128–151 (SKIH…KNHL), 152–172 (VEIP…DNRI), 173–196 (RKVP…GNPL), 197–221 (ENSG…EAKL), 222–242 (TGIP…HNKI), 243–266 (QAIE…HNQI), 267–290 (RMIE…NNKL), 291–313 (SRVP…TNNI), 314–343 (TKVG…NNPV), and 344–369 (PYWE…NYKK). N-linked (GlcNAc...) asparagine glycosylation is found at Asn-271 and Asn-312. Cys-322 and Cys-355 are oxidised to a cystine.

This sequence belongs to the small leucine-rich proteoglycan (SLRP) family. SLRP class I subfamily. Homodimer. Forms a ternary complex with MFAP2 and ELN. In terms of processing, the two attached glycosaminoglycan chains can be either chondroitin sulfate or dermatan sulfate. As to expression, found in several connective tissues, especially in articular cartilages.

The protein localises to the secreted. The protein resides in the extracellular space. Its subcellular location is the extracellular matrix. Its function is as follows. May be involved in collagen fiber assembly. This Ovis aries (Sheep) protein is Biglycan (BGN).